We begin with the raw amino-acid sequence, 968 residues long: Alanine--tRNA ligase, cytoplasmic (968 aa).

Met1 carries the N-acetylmethionine modification. ATP is bound by residues Arg77, His95, Trp176, and 214 to 216 (IWN). The L-alanine site is built by Asn216 and Asp239. Gly243 is an ATP binding site. A phosphoserine mark is found at Ser399 and Ser555. Zn(2+) is bound by residues His605, His609, Cys723, and His727. Residues 750–763 (RRIVAVTGAEAQKA) carry the Nuclear localization signal motif. Lys876 is subject to N6-acetyllysine. Lys943 is subject to N6,N6,N6-trimethyllysine; alternate. Lys943 carries the post-translational modification N6,N6-dimethyllysine; alternate. Lys943 bears the N6-methyllysine; alternate mark.

It belongs to the class-II aminoacyl-tRNA synthetase family. In terms of assembly, monomer. Interacts with ANKRD16; the interaction is direct. The cofactor is Zn(2+). In terms of processing, ISGylated. Post-translationally, methylation at 'Lys-943' by METTL21C.

The protein localises to the cytoplasm. It is found in the nucleus. It carries out the reaction tRNA(Ala) + L-alanine + ATP = L-alanyl-tRNA(Ala) + AMP + diphosphate. The catalysed reaction is (S)-lactate + ATP + H(+) = (S)-lactoyl-AMP + diphosphate. The enzyme catalyses (S)-lactoyl-AMP + L-lysyl-[protein] = N(6)-[(S)-lactoyl]-L-lysyl-[protein] + AMP + 2 H(+). Its activity is regulated as follows. The protein lactyltransferase activity is inhibited by beta-alanine. In terms of biological role, catalyzes the attachment of alanine to tRNA(Ala) in a two-step reaction: alanine is first activated by ATP to form Ala-AMP and then transferred to the acceptor end of tRNA(Ala). Also edits incorrectly charged tRNA(Ala) via its editing domain. In presence of high levels of lactate, also acts as a protein lactyltransferase that mediates lactylation of lysine residues in target proteins, such as TEAD1, TP53/p53 and YAP1. Protein lactylation takes place in a two-step reaction: lactate is first activated by ATP to form lactate-AMP and then transferred to lysine residues of target proteins. Acts as an inhibitor of TP53/p53 activity by catalyzing lactylation of TP53/p53. Acts as a positive regulator of the Hippo pathway by mediating lactylation of TEAD1 and YAP1. This chain is Alanine--tRNA ligase, cytoplasmic, found in Mus musculus (Mouse).